Reading from the N-terminus, the 178-residue chain is Inorganic pyrophosphatase (178 aa).

Positions 30, 44, and 56 each coordinate substrate. Positions 66, 71, and 103 each coordinate Mg(2+). Substrate is bound at residue Tyr-142.

It belongs to the PPase family. Homohexamer. The cofactor is Mg(2+).

It localises to the cytoplasm. It catalyses the reaction diphosphate + H2O = 2 phosphate + H(+). Catalyzes the hydrolysis of inorganic pyrophosphate (PPi) forming two phosphate ions. This Xylella fastidiosa (strain 9a5c) protein is Inorganic pyrophosphatase.